The following is a 1200-amino-acid chain: Metabotropic glycine receptor (1200 aa).

The signal sequence occupies residues 1–24 (MGAMAYSLLFCLLLAHLGLGEVGA). Positions 25 to 62 (SLDPPGRPDSPRERTPRGKQHGQQLPRASAPDPSIPWS) are disordered. Residues 25-417 (SLDPPGRPDS…CFVQEDKYLR (393 aa)) are Extracellular-facing. The interval 85–281 (YLYTGDFHQL…CENGSYKPGW (197 aa)) is cache-like region. N-linked (GlcNAc...) asparagine glycosylation is found at asparagine 98 and asparagine 143. Cysteine 99 and cysteine 272 are joined by a disulfide. Glycine is bound by residues serine 172 and arginine 173. N-linked (GlcNAc...) asparagine glycosylation is present at asparagine 215. The interval 234–253 (LHRRGSNQGPRGLGHSWRRR) is disordered. Glycine is bound at residue glutamate 271. Asparagine 274 carries N-linked (GlcNAc...) asparagine glycosylation. Aspartate 307 contacts glycine. An N-linked (GlcNAc...) asparagine glycan is attached at asparagine 333. Residues 418–439 (LAIISFQALCMLLDFVSMLVVY) traverse the membrane as a helical segment. Residues 440-451 (HFRKAKSIRASG) are Cytoplasmic-facing. Residues 452 to 474 (LILLETILFGSLLLYFPVVILYF) form a helical membrane-spanning segment. At 475-478 (EPST) the chain is on the extracellular side. A helical membrane pass occupies residues 479 to 501 (FRCILLRWARLLGFATVYGTVTL). Cysteine 481 and cysteine 573 form a disulfide bridge. Topologically, residues 502–525 (KLHRVLKVFLSRTAQRIPYMTGGR) are cytoplasmic. Residues 526–547 (VMRMLAVIVLVVFWFLVGWTSS) form a helical membrane-spanning segment. Topologically, residues 548–576 (MCQNLERDILLVGQGQTSDHLTFNMCLID) are extracellular. Residues 577-597 (RWDYMTAVAEFLFLLWGIYLC) traverse the membrane as a helical segment. Residues 598 to 611 (YAVRTVPSAFHEPR) are Cytoplasmic-facing. Residues 612–633 (YMAVAVHNELIITAIFHTIRFV) traverse the membrane as a helical segment. Over 634-642 (LASRLQPDW) the chain is Extracellular. Residues 643-664 (MLMLYFAHAHLTVTVTIGLLLI) traverse the membrane as a helical segment. The Cytoplasmic portion of the chain corresponds to 665 to 1200 (PKFSHSSNNP…SANKIPGPQK (536 aa)). A phosphoserine mark is found at serine 694, serine 705, and serine 708. The interval 757 to 875 (RITEIPETVS…EAESTESVPL (119 aa)) is disordered. Composition is skewed to basic and acidic residues over residues 769-781 (CSKE…DHSA) and 819-828 (STYDHVRDQT). Lysine 774 participates in a covalent cross-link: Glycyl lysine isopeptide (Lys-Gly) (interchain with G-Cter in ubiquitin). Residues 845–856 (ENSTLESLSSKK) show a composition bias toward low complexity. A phosphoserine mark is found at serine 865 and serine 944. The segment at 947-988 (DNVETIPNSGHMEEPRKPQKSGIMKQQRVSLPTANPDVSSGI) is disordered. Residues 973–988 (QRVSLPTANPDVSSGI) show a composition bias toward polar residues. The short motif at 1000-1004 (VCPWE) is the VCPWE motif 1 element. At serine 1059 the chain carries Phosphoserine. The VCPWE motif 2 signature appears at 1065 to 1069 (VCPWE). Serine 1074 is subject to Phosphoserine. The disordered stretch occupies residues 1130 to 1160 (QMGDQEKQTSSSVDIIPGSCNSSNNSHQPLT). The VCPWE motif 3 signature appears at 1165–1169 (VCPWE). Residues 1177–1200 (NAERSVTLPASSALSANKIPGPQK) are disordered. Residues 1178-1191 (AERSVTLPASSALS) show a composition bias toward polar residues.

Belongs to the G-protein coupled receptor 3 family. In terms of assembly, homodimer. Associates with the RGS7-GNB5 complex, promoting its localization to the cell membrane and regulating its GTPase activator activity. Interacts (via VCPWE motifs) with GNAO1. Interacts with GPC4. Interacts with EGFLAM. Highly expressed in brain. Expressed in several brain regions including the cerebral cortex, hippocampus, cerebellum and caudate putamen. Only expressed in neurons, and not in microglia, oligodendrocytes or astrocytes. Expressed in the visual center of the cerebral cortex. Also expressed in the eye, including photoreceptors, ganglion cells and trabecular meshwork.

The protein resides in the cell membrane. It localises to the postsynaptic cell membrane. Its subcellular location is the presynaptic cell membrane. It is found in the nucleus. In terms of biological role, metabotropic receptor for glycine that controls synapse formation and function in the brain. Acts as an atypical G-protein coupled receptor that recruits and regulates the RGS7-GNB5 complex instead of activating G proteins. In absence of glycine ligand, promotes the GTPase activator activity of RGS7, increasing the GTPase activity of G protein alpha subunits, thereby driving them into their inactive GDP-bound form. Glycine-binding changes the conformation of the intracellular surface, inhibiting the GTPase activator activity of the RGS7-GNB5 complex, promoting G protein alpha subunits into their active GTP-bound form and regulating cAMP levels. Also able to bind taurine, a compound closely related to glycine, but with a two-fold lower affinity. Glycine receptor-dependent regulation of cAMP controls key ion channels, kinases and neurotrophic factors involved in neuronal excitability and synaptic transmission. Plays a pivotal role in regulating mood and cognition via its ability to regulate neuronal excitability in L2/L3 pyramidal neurons of the prefrontal cortex. Also involved in spatial learning by regulating hippocampal CA1 neuronal excitability. Acts as a synaptic organizer in the hippocampus, required for proper mossy fiber-CA3 neurocircuitry establishment, structure and function: induces presynaptic differentiation in contacting axons via its interaction with GPC4. In addition to glycine, may also act as a receptor for osteocalcin (Bglap or Bglap2) hormone: osteocalcin-binding initiates a signaling response that prevents neuronal apoptosis in the hippocampus and regulates the synthesis of neurotransmitters. This chain is Metabotropic glycine receptor, found in Mus musculus (Mouse).